Reading from the N-terminus, the 650-residue chain is Hemocyanin subunit 2 (650 aa).

O-linked (GalNAc...) serine glycans are attached at residues Ser-120 and Ser-172. Positions 193, 197, and 225 each coordinate Cu cation. An N-linked (GlcNAc...) asparagine glycan is attached at Asn-309. 3 residues coordinate Cu cation: His-344, His-348, and His-384.

Belongs to the tyrosinase family. Hemocyanin subfamily. In terms of assembly, hexamer of a number of different chains, of which five have been identified. In terms of processing, contains one N-glycosylated and three O-glycosylated residues. The position of one of the O-glycosylated residues has not been determined. Post-translationally, O-linked glycan at Ser-120 may be composed of two GalNAc, three Gal, and two N-acetylneuraminic acid units for a total 1525-Da MW. As to expression, hemolymph.

It is found in the secreted. The protein resides in the extracellular space. Functionally, hemocyanins are copper-containing oxygen carriers occurring freely dissolved in the hemolymph of many mollusks and arthropods. In Carcinus aestuarii (Green crab), this protein is Hemocyanin subunit 2.